Here is a 194-residue protein sequence, read N- to C-terminus: Der GTPase-activating protein YihI (194 aa).

The segment at 1 to 87 (MSRQKKSRNI…RDPRLGSRKK (87 aa)) is disordered. Residues 37–48 (TRYELDAKARED) are compositionally biased toward basic and acidic residues.

It belongs to the YihI family. As to quaternary structure, interacts with Der.

In terms of biological role, a GTPase-activating protein (GAP) that modifies Der/EngA GTPase function. May play a role in ribosome biogenesis. The polypeptide is Der GTPase-activating protein YihI (Mannheimia succiniciproducens (strain KCTC 0769BP / MBEL55E)).